Reading from the N-terminus, the 124-residue chain is Small ribosomal subunit protein uS12c (124 aa).

It belongs to the universal ribosomal protein uS12 family. As to quaternary structure, part of the 30S ribosomal subunit.

It localises to the plastid. The protein resides in the chloroplast. Its function is as follows. With S4 and S5 plays an important role in translational accuracy. Located at the interface of the 30S and 50S subunits. The protein is Small ribosomal subunit protein uS12c (rps12) of Cyanidium caldarium (Red alga).